The following is a 120-amino-acid chain: Putative monooxygenase GME11364 (120 aa).

The region spanning 9–99 (VSVHIRLTVD…ILLKPHEVEL (91 aa)) is the ABM domain.

This sequence belongs to the LsrG family.

The protein operates within secondary metabolite biosynthesis. Its function is as follows. Putative monooxygenase; part of the gene cluster that mediates the biosynthesis of dibenzodioxocinones such as pestalotiollide B, a novel class of inhibitors against cholesterol ester transfer protein (CEPT). The biosynthesis initiates from condensation of acetate and malonate units catalyzed by the non-reducing PKS pks8/GME11356. Pks8/GME11356 lacks a thioesterase (TE) domain, which is important to the cyclizing of the third ring of atrochrysone carboxylic acid, and the esterase GME11355 might play the role of TE and catalyzes the cyclization reaction of the C ring. The lactamase-like protein GME11357 (or other beta-lactamases in Pestalotiopsis microspora) probably hydrolyzes the thioester bond between the ACP of pks8/GME11356 and the intermediate to release atrochrysone carboxylic acid, which is spontaneously dehydrates to form endocrocin anthrone. Endocrocin anthrone is further converted to emodin via the endocrocin intermediate. Emodin is then oxidized by several enzymes such as the Baeyer-Villiger oxidase GME11358, the oxidoreductase GME11367, the short chain dehydrogenase/reductase GME11373, as well as by other oxidoreductases from the cluster, to modify the A and C rings and open the B ring, and finally yield monodictyphenone. The prenyltransferase GME11375 may catalyze the addition reaction between the C5 side chains and the carbon bone of dibenzodioxocinones. The remaining biochemical reactions to the final product dibenzodioxocinones should be methylation catalyzed by methyltransferase GME11366 and reduction and lactonization reaction catalyzed by a series of oxidordeuctases. In Pestalotiopsis microspora, this protein is Putative monooxygenase GME11364.